The primary structure comprises 62 residues: Amolopin-P1 (62 aa).

A signal peptide spans 1–22 (MFPMKKSLLLLFFFGPISLSFC). The propeptide occupies 23-44 (DQERGADEEENGGEVTEQEVKR).

Expressed by the skin glands.

The protein localises to the secreted. Its function is as follows. Antimicrobial peptide with activity against Gram-positive bacteria. Has been tested against S.aureus (MIC=37.5 ug/mL), against B.pumilus (MIC=75.0 ug/mL), B.cereus (no activity detected). Does not show activity against Gram-negative bacteria (E.coli, B.dysenteriae, A.calcoaceticus, P.aeruginosa) and fungi (C.albicans). Does not show hemolytic activity against rabbit erythrocytes. This Amolops loloensis (Lolokou Sucker Frog) protein is Amolopin-P1.